The primary structure comprises 166 residues: ATP synthase subunit b (166 aa).

Residues 8-28 (FSFGLFFWQALILVILILLLV) traverse the membrane as a helical segment.

This sequence belongs to the ATPase B chain family. As to quaternary structure, F-type ATPases have 2 components, F(1) - the catalytic core - and F(0) - the membrane proton channel. F(1) has five subunits: alpha(3), beta(3), gamma(1), delta(1), epsilon(1). F(0) has three main subunits: a(1), b(2) and c(10-14). The alpha and beta chains form an alternating ring which encloses part of the gamma chain. F(1) is attached to F(0) by a central stalk formed by the gamma and epsilon chains, while a peripheral stalk is formed by the delta and b chains.

The protein localises to the cell inner membrane. In terms of biological role, f(1)F(0) ATP synthase produces ATP from ADP in the presence of a proton or sodium gradient. F-type ATPases consist of two structural domains, F(1) containing the extramembraneous catalytic core and F(0) containing the membrane proton channel, linked together by a central stalk and a peripheral stalk. During catalysis, ATP synthesis in the catalytic domain of F(1) is coupled via a rotary mechanism of the central stalk subunits to proton translocation. Functionally, component of the F(0) channel, it forms part of the peripheral stalk, linking F(1) to F(0). The chain is ATP synthase subunit b from Flavobacterium johnsoniae (strain ATCC 17061 / DSM 2064 / JCM 8514 / BCRC 14874 / CCUG 350202 / NBRC 14942 / NCIMB 11054 / UW101) (Cytophaga johnsonae).